Reading from the N-terminus, the 229-residue chain is Uracil-DNA glycosylase (229 aa).

Asp64 acts as the Proton acceptor in catalysis.

It belongs to the uracil-DNA glycosylase (UDG) superfamily. UNG family.

It is found in the cytoplasm. The catalysed reaction is Hydrolyzes single-stranded DNA or mismatched double-stranded DNA and polynucleotides, releasing free uracil.. Its function is as follows. Excises uracil residues from the DNA which can arise as a result of misincorporation of dUMP residues by DNA polymerase or due to deamination of cytosine. This Geobacillus kaustophilus (strain HTA426) protein is Uracil-DNA glycosylase.